The sequence spans 71 residues: uncharacterized protein (71 aa).

The Sm domain occupies proline 15 to tyrosine 71.

This is an uncharacterized protein from Methanocaldococcus jannaschii (strain ATCC 43067 / DSM 2661 / JAL-1 / JCM 10045 / NBRC 100440) (Methanococcus jannaschii).